A 268-amino-acid chain; its full sequence is AN1-type zinc finger protein 1 (268 aa).

Alanine 2 is modified (N-acetylalanine). 2 consecutive AN1-type zinc fingers follow at residues 4–52 (LDIG…VINE) and 58–106 (QHTS…IPKP). Zn(2+) is bound by residues cysteine 10, cysteine 15, cysteine 25, cysteine 28, cysteine 33, histidine 36, histidine 42, cysteine 44, cysteine 64, cysteine 69, cysteine 79, cysteine 82, cysteine 87, histidine 90, histidine 96, and cysteine 98. Residues 160 to 260 (QTERIYFQVF…EYLNDEEQFC (101 aa)) form a ubiquitin-like region.

In terms of assembly, associates with the 26S proteasome; this association occurs upon exposure to arsenite and is reduced in the presence of ATP. Interacts (via AN1-type 1 and 2 zinc fingers) with PSMD1; this interaction is increased upon arsenite treatment and occurs in an ATP-independent manner. Interacts with PSMC4. Interacts with PSMA1. Interacts (via its ubiquitin-like region) with VCP; this interaction occurs in an arsenite-dependent manner and is necessary for the recruitment of the ubiquitin-selective ATPase VCP to stress granules (SGs).

The protein localises to the cytoplasm. It localises to the stress granule. Its function is as follows. Plays a role in the regulation of cytoplasmic stress granules (SGs) turnover. SGs are dynamic and transient cytoplasmic ribonucleoprotein assemblies important for cellular protein homeostasis when protein production is suspended after acute exogenous stress. Associates with SGs and is involved in the efficient and specific arsenite-induced clearance process of SGs through the recruitment of the ubiquitin-selective ATPase VCP and the 26S proteasome. This process requires both complexes for efficient degradation of damaged ubiquitinated SG proteins during recovery from arsenite stress, and hence avoiding aberrant cytoplasmic SGs degradation via autophagy. The chain is AN1-type zinc finger protein 1 from Homo sapiens (Human).